A 359-amino-acid chain; its full sequence is Protein-glutamate methylesterase/protein-glutamine glutaminase 1 (359 aa).

The 118-residue stretch at 4–121 (SVLIVDDSAV…RAFLLEAAKE (118 aa)) folds into the Response regulatory domain. The residue at position 55 (Asp55) is a 4-aspartylphosphate. The CheB-type methylesterase domain occupies 169–354 (YRTTEKIIAI…MSLERIAHML (186 aa)). Residues Ser181, His207, and Asp303 contribute to the active site.

Belongs to the CheB family. Phosphorylated by CheA. Phosphorylation of the N-terminal regulatory domain activates the methylesterase activity.

The protein resides in the cytoplasm. It carries out the reaction [protein]-L-glutamate 5-O-methyl ester + H2O = L-glutamyl-[protein] + methanol + H(+). It catalyses the reaction L-glutaminyl-[protein] + H2O = L-glutamyl-[protein] + NH4(+). Functionally, involved in chemotaxis. Part of a chemotaxis signal transduction system that modulates chemotaxis in response to various stimuli. Catalyzes the demethylation of specific methylglutamate residues introduced into the chemoreceptors (methyl-accepting chemotaxis proteins or MCP) by CheR. Also mediates the irreversible deamidation of specific glutamine residues to glutamic acid. The protein is Protein-glutamate methylesterase/protein-glutamine glutaminase 1 of Chromobacterium violaceum (strain ATCC 12472 / DSM 30191 / JCM 1249 / CCUG 213 / NBRC 12614 / NCIMB 9131 / NCTC 9757 / MK).